Here is a 303-residue protein sequence, read N- to C-terminus: Putative monooxygenase p33MONOX (303 aa).

Disordered stretches follow at residues 1–20 (MASR…LGKM), 37–56 (LEDP…IPWK), 66–96 (HLDK…KAPV), 156–233 (KLQS…LQKS), and 260–283 (RVGE…GKKQ). Thr44 bears the Phosphothreonine mark. The short motif at 67-77 (LDKTEEGAASV) is the Flavin-containing monooxygenase motif element. A compositionally biased stretch (polar residues) spans 76–89 (SVSSLAVTPSPATD). Low complexity predominate over residues 170–183 (ASAQSTPSSTPHAS). Thr175 carries the phosphothreonine modification. At Ser183 the chain carries Phosphoserine.

This sequence belongs to the P33MONOX family. In terms of assembly, interacts with NELFB, NOL12 and PRNP. In terms of tissue distribution, expressed in neuronal pyramidal cells of the hippocampus and in the neurons of the cortex.

It localises to the cytoplasm. Potential NADPH-dependent oxidoreductase. May be involved in the regulation of neuronal survival, differentiation and axonal outgrowth. This Mus musculus (Mouse) protein is Putative monooxygenase p33MONOX (P33monox).